A 240-amino-acid polypeptide reads, in one-letter code: ATP-dependent dethiobiotin synthetase BioD (240 aa).

Position 13-18 (13-18 (GVGKTI)) interacts with ATP. Threonine 17 contributes to the Mg(2+) binding site. Lysine 38 is an active-site residue. Threonine 42 serves as a coordination point for substrate. ATP is bound by residues aspartate 55, 116-119 (EGVG), and 214-216 (PYL). The Mg(2+) site is built by aspartate 55 and glutamate 116.

It belongs to the dethiobiotin synthetase family. As to quaternary structure, homodimer. Requires Mg(2+) as cofactor.

The protein localises to the cytoplasm. The catalysed reaction is (7R,8S)-7,8-diammoniononanoate + CO2 + ATP = (4R,5S)-dethiobiotin + ADP + phosphate + 3 H(+). Its pathway is cofactor biosynthesis; biotin biosynthesis; biotin from 7,8-diaminononanoate: step 1/2. Functionally, catalyzes a mechanistically unusual reaction, the ATP-dependent insertion of CO2 between the N7 and N8 nitrogen atoms of 7,8-diaminopelargonic acid (DAPA, also called 7,8-diammoniononanoate) to form a ureido ring. This chain is ATP-dependent dethiobiotin synthetase BioD, found in Thermodesulfovibrio yellowstonii (strain ATCC 51303 / DSM 11347 / YP87).